The following is a 431-amino-acid chain: MTDATRDPGFFTQSLSERDPELFGAITDELGRQRDEIELIASENIVSAAVMEAQGSVLTNKYAEGYPGRRYYGGCQYVDVAENLAIDRAKQLFNCEFANVQPNSGSQANQGVFQAILKPGDTILGMDLASGGHLTHGAAPNQSGKWFNAVHYGVRESDCLIDYDQVQALATEHQPKLIIAGGSAIPRQIDFAKFREIADSVGAYLLVDMAHFAGLVAAGEHPSPFPHADVATTTTHKTLRGPRGGMILTNNPDLAKKFNSAIFPGIQGGPLMHVIAGKAAAFGEALKPEFKSYQKQVRANAVALADELIKGGLDIVTGGTDTHVMLVDLRPKGVTGNIVDKALGRAHITTNKNGIPFDPEKPTVTSGIRLGTPAGTTRGFGEEEFREIARLIVEVVDGLAANGEDGNAAVEEAVRGKVAALCGRFPLYPNL.

(6S)-5,6,7,8-tetrahydrofolate-binding positions include leucine 128 and 132–134 (GHL). Lysine 237 carries the post-translational modification N6-(pyridoxal phosphate)lysine.

This sequence belongs to the SHMT family. In terms of assembly, homodimer. It depends on pyridoxal 5'-phosphate as a cofactor.

It is found in the cytoplasm. The catalysed reaction is (6R)-5,10-methylene-5,6,7,8-tetrahydrofolate + glycine + H2O = (6S)-5,6,7,8-tetrahydrofolate + L-serine. Its pathway is one-carbon metabolism; tetrahydrofolate interconversion. It functions in the pathway amino-acid biosynthesis; glycine biosynthesis; glycine from L-serine: step 1/1. In terms of biological role, catalyzes the reversible interconversion of serine and glycine with tetrahydrofolate (THF) serving as the one-carbon carrier. This reaction serves as the major source of one-carbon groups required for the biosynthesis of purines, thymidylate, methionine, and other important biomolecules. Also exhibits THF-independent aldolase activity toward beta-hydroxyamino acids, producing glycine and aldehydes, via a retro-aldol mechanism. This chain is Serine hydroxymethyltransferase, found in Ruegeria sp. (strain TM1040) (Silicibacter sp.).